The primary structure comprises 476 residues: Nyctalopin (476 aa).

Residues 1–18 (MLVLLLHAVVLGLPSAWA) form the signal peptide. LRR repeat units lie at residues 60 to 84 (VSID…PSLR), 85 to 108 (RLSL…PRLA), 110 to 133 (LRLA…SRLR), 134 to 157 (RLDL…PALR), 159 to 181 (LAAF…NLTH), 182 to 204 (AHLE…RRLR), 205 to 228 (SLSL…GVLE), 229 to 252 (HLLL…RRLR), 254 to 276 (LNLG…AELE), 277 to 300 (LLYL…SGLL), and 302 to 324 (LHLN…FFLG). Asn92 is a glycosylation site (N-linked (GlcNAc...) asparagine). Asn178 carries N-linked (GlcNAc...) asparagine glycosylation. Asn295 carries N-linked (GlcNAc...) asparagine glycosylation. In terms of domain architecture, LRRCT spans 336–387 (DCRLEWLRDWMEGSGRVTDVPCASPGSVAGLDLSQVTFGRSSDGLCVDPEEL). 3 N-linked (GlcNAc...) asparagine glycosylation sites follow: Asn388, Asn427, and Asn434.

This sequence belongs to the small leucine-rich proteoglycan (SLRP) family. SLRP class IV subfamily. Expressed in kidney and retina. Also at low levels in brain, testis and muscle. Within the retina, expressed in the inner segment of photoreceptors, outer and inner nuclear layers and the ganglion cell layer.

Its subcellular location is the secreted. The protein localises to the extracellular space. It is found in the extracellular matrix. The chain is Nyctalopin (NYX) from Homo sapiens (Human).